A 481-amino-acid polypeptide reads, in one-letter code: Ribosomal protein uS12 methylthiotransferase RimO (481 aa).

One can recognise an MTTase N-terminal domain in the interval 38-148 (NRIGFVSLGC…VLKHVHKYVP (111 aa)). C47, C83, C112, C180, C184, and C187 together coordinate [4Fe-4S] cluster. The Radical SAM core domain maps to 166-403 (LTPKHYAYLK…MEVQAEISAE (238 aa)). The region spanning 406 to 472 (ARFVGRTMDI…EHDLWAELVD (67 aa)) is the TRAM domain.

It belongs to the methylthiotransferase family. RimO subfamily. Requires [4Fe-4S] cluster as cofactor.

The protein localises to the cytoplasm. It catalyses the reaction L-aspartate(89)-[ribosomal protein uS12]-hydrogen + (sulfur carrier)-SH + AH2 + 2 S-adenosyl-L-methionine = 3-methylsulfanyl-L-aspartate(89)-[ribosomal protein uS12]-hydrogen + (sulfur carrier)-H + 5'-deoxyadenosine + L-methionine + A + S-adenosyl-L-homocysteine + 2 H(+). Catalyzes the methylthiolation of an aspartic acid residue of ribosomal protein uS12. The chain is Ribosomal protein uS12 methylthiotransferase RimO from Shewanella oneidensis (strain ATCC 700550 / JCM 31522 / CIP 106686 / LMG 19005 / NCIMB 14063 / MR-1).